Consider the following 381-residue polypeptide: Estradiol 17-beta-dehydrogenase 2 (381 aa).

A helical; Signal-anchor for type II membrane protein transmembrane segment spans residues Phe4–Leu24. Gln83–Ala112 provides a ligand contact to NAD(+). Ser220 serves as a coordination point for substrate. Tyr233 acts as the Proton acceptor in catalysis.

The protein belongs to the short-chain dehydrogenases/reductases (SDR) family. In terms of assembly, homodimer. As to expression, highly expressed in the placenta, and in the small intestine, and liver.

The protein resides in the endoplasmic reticulum membrane. The enzyme catalyses 17beta-estradiol + NAD(+) = estrone + NADH + H(+). The catalysed reaction is testosterone + NAD(+) = androst-4-ene-3,17-dione + NADH + H(+). It carries out the reaction 17beta-hydroxy-5alpha-androstan-3-one + NAD(+) = 5alpha-androstan-3,17-dione + NADH + H(+). It catalyses the reaction (20S)-hydroxypregn-4-en-3-one + NAD(+) = progesterone + NADH + H(+). Catalyzes the NAD-dependent oxidation of highly active 17beta-hydroxysteroids, such as estradiol (E2), testosterone (T), and dihydrotestosterone (DHT), to their less active forms and thus regulates the biological potency of these steroids. Oxidizes estradiol to estrone, testosterone to androstenedione, and dihydrotestosterone to 5alpha-androstan-3,17-dione. Also has 20-alpha-HSD activity. The protein is Estradiol 17-beta-dehydrogenase 2 (Hsd17b2) of Rattus norvegicus (Rat).